Consider the following 64-residue polypeptide: Prokaryotic ubiquitin-like protein Pup (64 aa).

The interval 1 to 35 is disordered; it reads MAQGGQVSAGGGRRDDDEPIEQTSGAGTQQVNVTG. Residues 21–33 show a composition bias toward polar residues; the sequence is EQTSGAGTQQVNV. The tract at residues 21–58 is ARC ATPase binding; sequence EQTSGAGTQQVNVTGTDDLLDEIDGLLENNAEEFVRSY. Residue Gln-64 is modified to Deamidated glutamine. An Isoglutamyl lysine isopeptide (Gln-Lys) (interchain with K-? in acceptor proteins) cross-link involves residue Gln-64.

The protein belongs to the prokaryotic ubiquitin-like protein family. As to quaternary structure, strongly interacts with the proteasome-associated ATPase ARC through a hydrophobic interface; the interacting region of Pup lies in its C-terminal half. There is one Pup binding site per ARC hexamer ring. In terms of processing, is modified by deamidation of its C-terminal glutamine to glutamate by the deamidase Dop, a prerequisite to the subsequent pupylation process.

It functions in the pathway protein degradation; proteasomal Pup-dependent pathway. Its function is as follows. Protein modifier that is covalently attached to lysine residues of substrate proteins, thereby targeting them for proteasomal degradation. The tagging system is termed pupylation. In Corynebacterium jeikeium (strain K411), this protein is Prokaryotic ubiquitin-like protein Pup.